The primary structure comprises 2701 residues: Centromere-associated protein E (2701 aa).

Positions 6–329 (AVAVCVRVRP…LQFASTAKYM (324 aa)) constitute a Kinesin motor domain. Position 86–93 (86–93 (GQTASGKT)) interacts with ATP. A coiled-coil region spans residues 336–2590 (NEVSTDEALL…SNEVKTWKER (2255 aa)). 2 positions are modified to phosphoserine: S611 and S2083. The interval 2126–2476 (KEIEFQKELS…IDLEKMKNAK (351 aa)) is kinetochore-binding domain. The disordered stretch occupies residues 2355-2376 (SGAQVNPTTQDNKNPHVTSRAT). S2389 bears the Phosphoserine mark. The segment covering 2508 to 2527 (QAQDTSVISEHTDPQPSNKP) has biased composition (polar residues). Disordered regions lie at residues 2508–2533 (QAQDTSVISEHTDPQPSNKPLTCGGG) and 2588–2701 (KERT…CKTQ). The globular autoinhibitory domain stretch occupies residues 2510 to 2698 (QDTSVISEHT…ASSGKDVPEC (189 aa)). The segment covering 2588-2600 (KERTLKREAHKQV) has biased composition (basic and acidic residues). Over residues 2601-2625 (TCENSPKSPKVTGTASKKKQITPSQ) the composition is skewed to polar residues. A compositionally biased stretch (basic and acidic residues) spans 2626 to 2640 (CKERNLQDPVPKESP). 3 positions are modified to phosphoserine: S2639, S2647, and S2651. C2698 carries the cysteine methyl ester modification. A lipid anchor (S-farnesyl cysteine) is attached at C2698. Residues 2699 to 2701 (KTQ) constitute a propeptide, removed in mature form.

It belongs to the TRAFAC class myosin-kinesin ATPase superfamily. Kinesin family. As to quaternary structure, monomer. Interacts with CENPF. Interacts with BUB1B. Interacts with SEPT7. Interacts with KIF18A. Interacts with PRC1. Interacts with NUF2; this interaction determines kinetochore localization. Interacts with SKAP; this interaction greatly favors SKAP binding to microtubules. Interacts with TRAPPC12. Interacts with CTCF. Post-translationally, the C-terminal inhibitory domain is phosphorylated. Phosphorylation relieves autoinhibition of the kinetochore motor. In terms of processing, sumoylated with SUMO2 and SUMO3. The sumoylation mediates the association to the kinetochore.

It is found in the chromosome. The protein resides in the centromere. It localises to the kinetochore. Its subcellular location is the cytoplasm. The protein localises to the cytoskeleton. It is found in the spindle. Its function is as follows. Microtubule plus-end-directed kinetochore motor which plays an important role in chromosome congression, microtubule-kinetochore conjugation and spindle assembly checkpoint activation. Drives chromosome congression (alignment of chromosomes at the spindle equator resulting in the formation of the metaphase plate) by mediating the lateral sliding of polar chromosomes along spindle microtubules towards the spindle equator and by aiding the establishment and maintenance of connections between kinetochores and spindle microtubules. The transport of pole-proximal chromosomes towards the spindle equator is favored by microtubule tracks that are detyrosinated. Acts as a processive bi-directional tracker of dynamic microtubule tips; after chromosomes have congressed, continues to play an active role at kinetochores, enhancing their links with dynamic microtubule ends. Suppresses chromosome congression in NDC80-depleted cells and contributes positively to congression only when microtubules are stabilized. Plays an important role in the formation of stable attachments between kinetochores and spindle microtubules The stabilization of kinetochore-microtubule attachment also requires CENPE-dependent localization of other proteins to the kinetochore including BUB1B, MAD1 and MAD2. Plays a role in spindle assembly checkpoint activation (SAC) via its interaction with BUB1B resulting in the activation of its kinase activity, which is important for activating SAC. Necessary for the mitotic checkpoint signal at individual kinetochores to prevent aneuploidy due to single chromosome loss. The polypeptide is Centromere-associated protein E (CENPE) (Homo sapiens (Human)).